The following is a 181-amino-acid chain: Protein Abitram (181 aa).

The protein belongs to the ABITRAM family. As to quaternary structure, interacts with F-actin. Interacts with G-actin.

Its subcellular location is the nucleus speckle. The protein resides in the cell projection. The protein localises to the lamellipodium. It localises to the nucleus. It is found in the growth cone. Its subcellular location is the dendrite. In terms of biological role, actin-binding protein that regulates actin polymerization, filopodia dynamics and increases the branching of proximal dendrites of developing neurons. The protein is Protein Abitram of Homo sapiens (Human).